A 269-amino-acid polypeptide reads, in one-letter code: Formamidopyrimidine-DNA glycosylase (269 aa).

Pro2 acts as the Schiff-base intermediate with DNA in catalysis. Glu3 serves as the catalytic Proton donor. The active-site Proton donor; for beta-elimination activity is Lys57. DNA contacts are provided by His90, Arg109, and Lys150. The segment at 235-269 (QVYGRKGEPCRVCGTPIVATKHAQRATFYCRHCQK) adopts an FPG-type zinc-finger fold. The Proton donor; for delta-elimination activity role is filled by Arg259.

This sequence belongs to the FPG family. In terms of assembly, monomer. The cofactor is Zn(2+).

The catalysed reaction is Hydrolysis of DNA containing ring-opened 7-methylguanine residues, releasing 2,6-diamino-4-hydroxy-5-(N-methyl)formamidopyrimidine.. It carries out the reaction 2'-deoxyribonucleotide-(2'-deoxyribose 5'-phosphate)-2'-deoxyribonucleotide-DNA = a 3'-end 2'-deoxyribonucleotide-(2,3-dehydro-2,3-deoxyribose 5'-phosphate)-DNA + a 5'-end 5'-phospho-2'-deoxyribonucleoside-DNA + H(+). Functionally, involved in base excision repair of DNA damaged by oxidation or by mutagenic agents. Acts as a DNA glycosylase that recognizes and removes damaged bases. Has a preference for oxidized purines, such as 7,8-dihydro-8-oxoguanine (8-oxoG). Has AP (apurinic/apyrimidinic) lyase activity and introduces nicks in the DNA strand. Cleaves the DNA backbone by beta-delta elimination to generate a single-strand break at the site of the removed base with both 3'- and 5'-phosphates. The sequence is that of Formamidopyrimidine-DNA glycosylase from Salmonella agona (strain SL483).